We begin with the raw amino-acid sequence, 186 residues long: ATP synthase subunit delta, chloroplastic (186 aa).

This sequence belongs to the ATPase delta chain family. In terms of assembly, F-type ATPases have 2 components, F(1) - the catalytic core - and F(0) - the membrane proton channel. F(1) has five subunits: alpha(3), beta(3), gamma(1), delta(1), epsilon(1). CF(0) has four main subunits: a(1), b(1), b'(1) and c(10-14). The alpha and beta chains form an alternating ring which encloses part of the gamma chain. F(1) is attached to F(0) by a central stalk formed by the gamma and epsilon chains, while a peripheral stalk is formed by the delta, b and b' chains.

Its subcellular location is the plastid. The protein localises to the chloroplast thylakoid membrane. Its function is as follows. F(1)F(0) ATP synthase produces ATP from ADP in the presence of a proton or sodium gradient. F-type ATPases consist of two structural domains, F(1) containing the extramembraneous catalytic core and F(0) containing the membrane proton channel, linked together by a central stalk and a peripheral stalk. During catalysis, ATP synthesis in the catalytic domain of F(1) is coupled via a rotary mechanism of the central stalk subunits to proton translocation. Functionally, this protein is part of the stalk that links CF(0) to CF(1). It either transmits conformational changes from CF(0) to CF(1) or is implicated in proton conduction. The sequence is that of ATP synthase subunit delta, chloroplastic from Pyropia yezoensis (Susabi-nori).